We begin with the raw amino-acid sequence, 100 residues long: Urease subunit gamma (100 aa).

It belongs to the urease gamma subunit family. As to quaternary structure, heterotrimer of UreA (gamma), UreB (beta) and UreC (alpha) subunits. Three heterotrimers associate to form the active enzyme.

Its subcellular location is the cytoplasm. It catalyses the reaction urea + 2 H2O + H(+) = hydrogencarbonate + 2 NH4(+). It participates in nitrogen metabolism; urea degradation; CO(2) and NH(3) from urea (urease route): step 1/1. This Proteus hauseri protein is Urease subunit gamma.